A 289-amino-acid polypeptide reads, in one-letter code: Phosphatidylserine decarboxylase proenzyme (289 aa).

Catalysis depends on charge relay system; for autoendoproteolytic cleavage activity residues Asp88, His145, and Ser251. Residue Ser251 is the Schiff-base intermediate with substrate; via pyruvic acid; for decarboxylase activity of the active site. Ser251 carries the post-translational modification Pyruvic acid (Ser); by autocatalysis.

This sequence belongs to the phosphatidylserine decarboxylase family. PSD-B subfamily. Prokaryotic type I sub-subfamily. In terms of assembly, heterodimer of a large membrane-associated beta subunit and a small pyruvoyl-containing alpha subunit. Pyruvate is required as a cofactor. In terms of processing, is synthesized initially as an inactive proenzyme. Formation of the active enzyme involves a self-maturation process in which the active site pyruvoyl group is generated from an internal serine residue via an autocatalytic post-translational modification. Two non-identical subunits are generated from the proenzyme in this reaction, and the pyruvate is formed at the N-terminus of the alpha chain, which is derived from the carboxyl end of the proenzyme. The autoendoproteolytic cleavage occurs by a canonical serine protease mechanism, in which the side chain hydroxyl group of the serine supplies its oxygen atom to form the C-terminus of the beta chain, while the remainder of the serine residue undergoes an oxidative deamination to produce ammonia and the pyruvoyl prosthetic group on the alpha chain. During this reaction, the Ser that is part of the protease active site of the proenzyme becomes the pyruvoyl prosthetic group, which constitutes an essential element of the active site of the mature decarboxylase.

The protein localises to the cell membrane. It catalyses the reaction a 1,2-diacyl-sn-glycero-3-phospho-L-serine + H(+) = a 1,2-diacyl-sn-glycero-3-phosphoethanolamine + CO2. The protein operates within phospholipid metabolism; phosphatidylethanolamine biosynthesis; phosphatidylethanolamine from CDP-diacylglycerol: step 2/2. Catalyzes the formation of phosphatidylethanolamine (PtdEtn) from phosphatidylserine (PtdSer). The polypeptide is Phosphatidylserine decarboxylase proenzyme (Polaromonas naphthalenivorans (strain CJ2)).